The primary structure comprises 427 residues: Tyrosine--tRNA ligase (427 aa).

Tyr-33 lines the L-tyrosine pocket. A 'HIGH' region motif is present at residues 38–47 (PTASSLTIGN). Tyr-168 and Gln-172 together coordinate L-tyrosine. A 'KMSKS' region motif is present at residues 228–232 (KFGKS). Lys-231 contributes to the ATP binding site. The S4 RNA-binding domain maps to 361–427 (LDLLSTLTNS…KKNYYLLRFN (67 aa)).

It belongs to the class-I aminoacyl-tRNA synthetase family. TyrS type 1 subfamily. Homodimer.

The protein localises to the cytoplasm. The catalysed reaction is tRNA(Tyr) + L-tyrosine + ATP = L-tyrosyl-tRNA(Tyr) + AMP + diphosphate + H(+). In terms of biological role, catalyzes the attachment of tyrosine to tRNA(Tyr) in a two-step reaction: tyrosine is first activated by ATP to form Tyr-AMP and then transferred to the acceptor end of tRNA(Tyr). This chain is Tyrosine--tRNA ligase, found in Cytophaga hutchinsonii (strain ATCC 33406 / DSM 1761 / CIP 103989 / NBRC 15051 / NCIMB 9469 / D465).